A 287-amino-acid polypeptide reads, in one-letter code: Ribosomal RNA small subunit methyltransferase A (287 aa).

Residues Asn28, Leu30, Gly55, Glu77, Asp103, and Asn123 each contribute to the S-adenosyl-L-methionine site.

The protein belongs to the class I-like SAM-binding methyltransferase superfamily. rRNA adenine N(6)-methyltransferase family. RsmA subfamily.

It is found in the cytoplasm. It carries out the reaction adenosine(1518)/adenosine(1519) in 16S rRNA + 4 S-adenosyl-L-methionine = N(6)-dimethyladenosine(1518)/N(6)-dimethyladenosine(1519) in 16S rRNA + 4 S-adenosyl-L-homocysteine + 4 H(+). Its function is as follows. Specifically dimethylates two adjacent adenosines (A1518 and A1519) in the loop of a conserved hairpin near the 3'-end of 16S rRNA in the 30S particle. May play a critical role in biogenesis of 30S subunits. This Rhodopseudomonas palustris (strain BisA53) protein is Ribosomal RNA small subunit methyltransferase A.